Reading from the N-terminus, the 141-residue chain is Decarboxylase CPUR_05434 (141 aa).

Residues 26–121 enclose the EthD domain; the sequence is EGMSEEAYRN…MHDHEMFADT (96 aa).

This sequence belongs to the tpcK family.

The catalysed reaction is atrochrysone carboxylate + H(+) = atrochrysone + CO2. In terms of biological role, decarboxylase; part of the ergochrome gene cluster responsible for the typical purple-black color of the ergot sclerotia. The ergochrome gene cluster produces several ergot pigments including the yellow ergochrome secalonic acid and its derivatives, as well as the red anthraquinones endocrocin and clavorubin. The pathway begins with the synthesis of atrochrysone thioester by the polyketide synthase (PKS) CPUR_05437. The atrochrysone carboxyl ACP thioesterase CPUR_05436 then breaks the thioester bond and releases the atrochrysone carboxylic acid from CPUR_05437. The decarboxylase CPUR_05434 then catalyzes the concerted decarboxylation-elimination required to convert atochrysone carboxylic acid into emodin anthrone, which is further oxidized to emodin by the anthrone oxygenase CPUR_05435. Emodin is further modified to yield monodictyphenone via several steps involving CPUR_05427, CPUR_05428, CPUR_05429 and CPUR_05430. The short chain dehydrogenase/reductase CPUR_05418 then catalyzes the C-5 ketoreduction to give the xanthone skeleton of the monomeric units. Ergochromes formation requires further dimerization steps of different xanthone units, probably catalyzed by the cytochrome P450 monooxygenase CPUR_05419. CPUR_05425, CPUR_05426 and CPUR_05431 are unique to Claviceps, thus it is likely that they are involved in further modification of xanthone units or in their dimerization. The yellow ergochromes and the red anthraquinone pigments endocrocin and clavorubin are products from the same PKS derived precursors and the latter are likely shunt products in the pathway of xanthone biosynthesis. It is proposed that atrochrysone carboxylic acid released from the PKS CPUR_05437 can also be converted to endocrocin anthrone which is further oxidized into endocrocin by CPUR_05435. Endocrocin could be then modified to clavorubin, possibly by CPUR_05423 and CPUR_05431. Clavorubin is the principal anthraquinone metabolite produced by the cluster with a much higher yield compared to endocrocin. This chain is Decarboxylase CPUR_05434, found in Claviceps purpurea (strain 20.1) (Ergot fungus).